Reading from the N-terminus, the 234-residue chain is Endonuclease NucS (234 aa).

It belongs to the NucS endonuclease family.

It localises to the cytoplasm. In terms of biological role, cleaves both 3' and 5' ssDNA extremities of branched DNA structures. This is Endonuclease NucS from Bifidobacterium adolescentis (strain ATCC 15703 / DSM 20083 / NCTC 11814 / E194a).